Here is a 205-residue protein sequence, read N- to C-terminus: uncharacterized protein (205 aa).

The span at 1-25 shows a compositional bias: polar residues; it reads MSNNNNEAQQPVESTNVESQQNVVQ. The segment at 1–205 is disordered; it reads MSNNNNEAQQ…TSDPAQQVEA (205 aa). Residues 32 to 79 show a composition bias toward low complexity; the sequence is NENNDNNNNNNNNNNNNNNNNNNNNNNNNSNNNNNSSNNENNENNENN. Residues 80–122 show a composition bias toward basic and acidic residues; sequence SCEKSEQEKPKEPEEPVQEEKSKEPCDQQKVKENEPAEEKETE. 2 stretches are compositionally biased toward low complexity: residues 123–132 and 146–162; these read PAAPVEPENP and QHQQ…NGES. Basic and acidic residues predominate over residues 170 to 185; that stretch reads SENKKRSIDEAGDIKD. A compositionally biased stretch (polar residues) spans 194–205; that stretch reads VETSDPAQQVEA.

This is an uncharacterized protein from Dictyostelium discoideum (Social amoeba).